The sequence spans 704 residues: DNA ligase (704 aa).

Residues 43–47, 92–93, and Glu124 contribute to the NAD(+) site; these read DADYD and SL. The N6-AMP-lysine intermediate role is filled by Lys126. NAD(+) contacts are provided by Arg147, Glu182, Lys298, and Lys322. Residues Cys427, Cys430, Cys445, and Cys451 each contribute to the Zn(2+) site. Residues 625–704 form the BRCT domain; sequence PVESPIAGKI…DAWLRLIGDA (80 aa).

The protein belongs to the NAD-dependent DNA ligase family. LigA subfamily. Mg(2+) serves as cofactor. Mn(2+) is required as a cofactor.

The catalysed reaction is NAD(+) + (deoxyribonucleotide)n-3'-hydroxyl + 5'-phospho-(deoxyribonucleotide)m = (deoxyribonucleotide)n+m + AMP + beta-nicotinamide D-nucleotide.. DNA ligase that catalyzes the formation of phosphodiester linkages between 5'-phosphoryl and 3'-hydroxyl groups in double-stranded DNA using NAD as a coenzyme and as the energy source for the reaction. It is essential for DNA replication and repair of damaged DNA. The chain is DNA ligase from Cereibacter sphaeroides (strain ATCC 17025 / ATH 2.4.3) (Rhodobacter sphaeroides).